Reading from the N-terminus, the 235-residue chain is Small ribosomal subunit protein uS3 (235 aa).

A KH type-2 domain is found at 39–107 (VRKFLNKELA…PAQINIAEVK (69 aa)). Residues 215-235 (AQSEQQPADKPKKAPRGKGRK) form a disordered region.

This sequence belongs to the universal ribosomal protein uS3 family. As to quaternary structure, part of the 30S ribosomal subunit. Forms a tight complex with proteins S10 and S14.

Its function is as follows. Binds the lower part of the 30S subunit head. Binds mRNA in the 70S ribosome, positioning it for translation. This Haemophilus influenzae (strain ATCC 51907 / DSM 11121 / KW20 / Rd) protein is Small ribosomal subunit protein uS3.